A 498-amino-acid polypeptide reads, in one-letter code: Ribosomal RNA small subunit methyltransferase G 2 (498 aa).

A methyltransferase G region spans residues 1–230 (MRNGTIRYPG…FQRLGPPTRI (230 aa)). Residues glycine 89, methionine 94, and arginine 154 each contribute to the S-adenosyl-L-methionine site. Residues 231–498 (RKETAMKRHG…SQTKHSPAPA (268 aa)) are methyltransferase TrmH family.

The protein in the N-terminal section; belongs to the methyltransferase superfamily. RNA methyltransferase RsmG family. This sequence in the C-terminal section; belongs to the class IV-like SAM-binding methyltransferase superfamily. RNA methyltransferase TrmH family.

The protein localises to the cytoplasm. It carries out the reaction guanosine(527) in 16S rRNA + S-adenosyl-L-methionine = N(7)-methylguanosine(527) in 16S rRNA + S-adenosyl-L-homocysteine. Functionally, specifically methylates the N7 position of guanine in position 527 of 16S rRNA. The chain is Ribosomal RNA small subunit methyltransferase G 2 (rsmG2) from Syntrophobacter fumaroxidans (strain DSM 10017 / MPOB).